A 590-amino-acid chain; its full sequence is UvrABC system protein C (590 aa).

Residues 15-98 form the GIY-YIG domain; it reads AEPGVYQFVA…VKRHQPRYNV (84 aa). Positions 207–242 constitute a UVR domain; that stretch reads GALADPLRREMAAAAQAEAFERAANLRDRLAVVEGF.

It belongs to the UvrC family. In terms of assembly, interacts with UvrB in an incision complex.

It is found in the cytoplasm. Functionally, the UvrABC repair system catalyzes the recognition and processing of DNA lesions. UvrC both incises the 5' and 3' sides of the lesion. The N-terminal half is responsible for the 3' incision and the C-terminal half is responsible for the 5' incision. The chain is UvrABC system protein C from Halobacterium salinarum (strain ATCC 29341 / DSM 671 / R1).